A 402-amino-acid chain; its full sequence is Arginine biosynthesis bifunctional protein ArgJ (402 aa).

Residues T149, K175, T186, E266, N397, and T402 each coordinate substrate. The active-site Nucleophile is the T186.

Belongs to the ArgJ family. In terms of assembly, heterotetramer of two alpha and two beta chains.

It localises to the cytoplasm. The catalysed reaction is N(2)-acetyl-L-ornithine + L-glutamate = N-acetyl-L-glutamate + L-ornithine. The enzyme catalyses L-glutamate + acetyl-CoA = N-acetyl-L-glutamate + CoA + H(+). The protein operates within amino-acid biosynthesis; L-arginine biosynthesis; L-ornithine and N-acetyl-L-glutamate from L-glutamate and N(2)-acetyl-L-ornithine (cyclic): step 1/1. Its pathway is amino-acid biosynthesis; L-arginine biosynthesis; N(2)-acetyl-L-ornithine from L-glutamate: step 1/4. In terms of biological role, catalyzes two activities which are involved in the cyclic version of arginine biosynthesis: the synthesis of N-acetylglutamate from glutamate and acetyl-CoA as the acetyl donor, and of ornithine by transacetylation between N(2)-acetylornithine and glutamate. The protein is Arginine biosynthesis bifunctional protein ArgJ of Prochlorococcus marinus subsp. pastoris (strain CCMP1986 / NIES-2087 / MED4).